The primary structure comprises 464 residues: Sushi-repeat-containing protein SRPX (464 aa).

Residues 1–30 form the signal peptide; that stretch reads MGSPGLRPELLLPQVLPLLLALLHVLPSQG. An O-linked (Xyl...) (chondroitin sulfate) serine glycan is attached at S34. 5 disulfide bridges follow: C57/C85, C69/C103, C89/C115, C120/C161, and C147/C174. Sushi domains are found at residues 57 to 117 and 118 to 176; these read CSPI…ICKQ and KRCP…SCVD. The 83-residue stretch at 177–259 folds into the HYR domain; that stretch reads LEPPRIKCPS…TCKFRVKVRV (83 aa). Residues 260-319 enclose the Sushi 3 domain; that stretch reads RRCGKLNAPENGYMKCSSDGDNYGATCEFSCIGGYELQGSPARVCQSNLAWSGTEPSCAA. 2 cysteine pairs are disulfide-bonded: C262–C304 and C290–C317.

In Mus musculus (Mouse), this protein is Sushi-repeat-containing protein SRPX (Srpx).